Consider the following 161-residue polypeptide: Cytochrome c-type biogenesis protein CcmE (161 aa).

Over 1 to 13 (MSWLPKSPKARRR) the chain is Cytoplasmic. Residues 14–34 (LMLVAAIAPVLAVAAGLTLWG) traverse the membrane as a helical; Signal-anchor for type II membrane protein segment. At 35–161 (LSDSISFFYT…QRPEHQGDAL (127 aa)) the chain is on the periplasmic side. Heme contacts are provided by histidine 128 and tyrosine 132.

It belongs to the CcmE/CycJ family.

It localises to the cell inner membrane. Heme chaperone required for the biogenesis of c-type cytochromes. Transiently binds heme delivered by CcmC and transfers the heme to apo-cytochromes in a process facilitated by CcmF and CcmH. The protein is Cytochrome c-type biogenesis protein CcmE of Phenylobacterium zucineum (strain HLK1).